A 34-amino-acid chain; its full sequence is Calcitonin-like peptide 2 (34 aa).

C2 and C7 are oxidised to a cystine. F34 is modified (phenylalanine amide).

The sequence is that of Calcitonin-like peptide 2 from Odorrana schmackeri (Schmacker's frog).